Reading from the N-terminus, the 715-residue chain is MEQQYRTYDFELAGRKLTLEFGKMAKQAHGSVLVRYGDTAILSAVTVSKEPKPLDFFPLTVNYEERLYAVGKIPGGFIKREGRPSEKAILASRLIDRPVRPLFAEGFRNDVQIVNTVLSVDQDCSPEIAAMIGTSAALCVSEIPFEGPIAGVIVGRIDGEFVINPTVAQAEKSDIHLTVAGTHKAINMVEAAANQVPEAIMLEAIMAGHDVIKQLVEFQNMIVSEIGKQKMEVILHEVDPEIDQAVRAYAEARLKEAVRIEEKQARYDAIDDIKAETKEHFAAKDAEAYPEQEKMISEVLGNIVKDEVRRLITDEKVRPDGRALNEIRPLSSETTILSRTHGSAMFTRGQTQALSVCTLGALGDVQILDGLGLEESKRFMHHYNFPPYSVGEARPLRPPGRREIGHGALGERAIEPIIPSEVEFPYTIRLVSEVIESNGSTSQASICASVLALMDAGVPIKAPVAGIAMGLIMSKDEKSFSILTDIQGMEDHLGDMDFKVAGTEAGVTAIQMDIKISGINREILELALEQARVGRLHILNHMMSTISEPRKELSPYAPKIMTMTINPEKIRDVIGPQGRVINKIIEETGVKIDIEQDGRVFIASINHEANLRAKQIIEDLVREVAVGQVYLGTVKRVEKYGAFIELFAGKEGLCHISQLAEERVAKTEDVVAVGDKVQVKVTEIDDQGRVNLSRKAVLKEQAAAEQAAETPTKAE.

2 residues coordinate Mg(2+): aspartate 491 and aspartate 497. The 60-residue stretch at 558–617 folds into the KH domain; the sequence is PKIMTMTINPEKIRDVIGPQGRVINKIIEETGVKIDIEQDGRVFIASINHEANLRAKQII. The S1 motif domain occupies 627–695; sequence GQVYLGTVKR…DQGRVNLSRK (69 aa).

The protein belongs to the polyribonucleotide nucleotidyltransferase family. Requires Mg(2+) as cofactor.

The protein localises to the cytoplasm. The catalysed reaction is RNA(n+1) + phosphate = RNA(n) + a ribonucleoside 5'-diphosphate. In terms of biological role, involved in mRNA degradation. Catalyzes the phosphorolysis of single-stranded polyribonucleotides processively in the 3'- to 5'-direction. In Brevibacillus brevis (strain 47 / JCM 6285 / NBRC 100599), this protein is Polyribonucleotide nucleotidyltransferase.